Here is a 95-residue protein sequence, read N- to C-terminus: Aspartyl/glutamyl-tRNA(Asn/Gln) amidotransferase subunit C (95 aa).

It belongs to the GatC family. Heterotrimer of A, B and C subunits.

The enzyme catalyses L-glutamyl-tRNA(Gln) + L-glutamine + ATP + H2O = L-glutaminyl-tRNA(Gln) + L-glutamate + ADP + phosphate + H(+). The catalysed reaction is L-aspartyl-tRNA(Asn) + L-glutamine + ATP + H2O = L-asparaginyl-tRNA(Asn) + L-glutamate + ADP + phosphate + 2 H(+). Functionally, allows the formation of correctly charged Asn-tRNA(Asn) or Gln-tRNA(Gln) through the transamidation of misacylated Asp-tRNA(Asn) or Glu-tRNA(Gln) in organisms which lack either or both of asparaginyl-tRNA or glutaminyl-tRNA synthetases. The reaction takes place in the presence of glutamine and ATP through an activated phospho-Asp-tRNA(Asn) or phospho-Glu-tRNA(Gln). In Ectopseudomonas mendocina (strain ymp) (Pseudomonas mendocina), this protein is Aspartyl/glutamyl-tRNA(Asn/Gln) amidotransferase subunit C.